Reading from the N-terminus, the 424-residue chain is Virion nicking-joining enzyme (424 aa).

The protein belongs to the orthopoxvirus OPG042 family.

It is found in the virion. Functionally, DNA nicking enzyme that cleaves extruded cruciform DNA at its tip. Probably nicks viral hairpins. The chain is Virion nicking-joining enzyme (OPG042) from Cynomys gunnisoni (Gunnison's prairie dog).